Here is a 278-residue protein sequence, read N- to C-terminus: Serine/arginine-rich splicing factor SR34B (278 aa).

Positions 7-82 constitute an RRM 1 domain; the sequence is RTIYVGNLPG…HHLRVELAHG (76 aa). A compositionally biased stretch (basic and acidic residues) spans 81–91; sequence HGGRRSSHDAR. Disordered regions lie at residues 81–121 and 192–263; these read HGGR…SEYR and EYDS…RSLS. The span at 95–107 shows a compositional bias: gly residues; that stretch reads SGRGRGGRGGGDG. Composition is skewed to basic and acidic residues over residues 108 to 120 and 192 to 201; these read GGRE…RSEY and EYDSRRDSRS. Residues 120-195 enclose the RRM 2 domain; that stretch reads YRVVVSGLPS…EYVRVREYDS (76 aa). Phosphoserine is present on residues Ser201, Ser203, Ser225, Ser231, Ser233, Ser242, Ser250, Ser259, and Ser263. A compositionally biased stretch (basic residues) spans 207-243; the sequence is SYSKSRSRGRSPSRSRSRSRSRSKSRSPKAKSLRRSP.

Belongs to the splicing factor SR family. SR subfamily. As to quaternary structure, component of the spliceosome.

It is found in the nucleus speckle. The protein resides in the nucleus. The protein localises to the nucleoplasm. In terms of biological role, probably involved in intron recognition and spliceosome assembly. The chain is Serine/arginine-rich splicing factor SR34B (SR34B) from Arabidopsis thaliana (Mouse-ear cress).